Here is a 213-residue protein sequence, read N- to C-terminus: Protein HSH49 (213 aa).

RRM domains are found at residues 9-88 (NTVY…QVTN) and 108-185 (AKLF…YAFK).

Interacts with RDS3.

The protein resides in the nucleus. Functionally, possible SF3b-like factor. This Saccharomyces cerevisiae (strain ATCC 204508 / S288c) (Baker's yeast) protein is Protein HSH49 (HSH49).